A 131-amino-acid polypeptide reads, in one-letter code: Small ribosomal subunit protein uS8 (131 aa).

Belongs to the universal ribosomal protein uS8 family. As to quaternary structure, part of the 30S ribosomal subunit. Contacts proteins S5 and S12.

In terms of biological role, one of the primary rRNA binding proteins, it binds directly to 16S rRNA central domain where it helps coordinate assembly of the platform of the 30S subunit. This chain is Small ribosomal subunit protein uS8, found in Methylococcus capsulatus (strain ATCC 33009 / NCIMB 11132 / Bath).